A 324-amino-acid polypeptide reads, in one-letter code: Probable carboxylesterase 9 (324 aa).

The Involved in the stabilization of the negatively charged intermediate by the formation of the oxyanion hole motif lies at 86-88 (HGS). Active-site residues include Ser-171, Asp-272, and His-302.

Belongs to the 'GDXG' lipolytic enzyme family. In terms of tissue distribution, expressed in flowers.

The enzyme catalyses a carboxylic ester + H2O = an alcohol + a carboxylate + H(+). Its function is as follows. Carboxylesterase acting on esters with varying acyl chain length. This chain is Probable carboxylesterase 9 (CXE9), found in Arabidopsis thaliana (Mouse-ear cress).